Reading from the N-terminus, the 429-residue chain is Citrate synthase, plasmid (429 aa).

Active-site residues include His-306 and Asp-364.

This sequence belongs to the citrate synthase family.

The enzyme catalyses oxaloacetate + acetyl-CoA + H2O = citrate + CoA + H(+). It participates in carbohydrate metabolism; tricarboxylic acid cycle; isocitrate from oxaloacetate: step 1/2. The exact function of the plasmid-encoded citrate synthase is not clear, it could help nodulation by allowing the bacteria to use citrate as a chelator of iron and calcium. This chain is Citrate synthase, plasmid (pcsA), found in Rhizobium tropici.